Consider the following 520-residue polypeptide: Peptide chain release factor 3 (520 aa).

One can recognise a tr-type G domain in the interval 8–277 (ESRKTFAIIS…HAPMPNARQT (270 aa)). GTP-binding positions include 17–24 (SHPDAGKT), 85–89 (DTPGH), and 139–142 (NKLD).

This sequence belongs to the TRAFAC class translation factor GTPase superfamily. Classic translation factor GTPase family. PrfC subfamily.

It is found in the cytoplasm. Functionally, increases the formation of ribosomal termination complexes and stimulates activities of RF-1 and RF-2. It binds guanine nucleotides and has strong preference for UGA stop codons. It may interact directly with the ribosome. The stimulation of RF-1 and RF-2 is significantly reduced by GTP and GDP, but not by GMP. The chain is Peptide chain release factor 3 from Staphylococcus saprophyticus subsp. saprophyticus (strain ATCC 15305 / DSM 20229 / NCIMB 8711 / NCTC 7292 / S-41).